The chain runs to 404 residues: Glucose-1-phosphate adenylyltransferase (404 aa).

Alpha-D-glucose 1-phosphate contacts are provided by residues Tyr99, Gly164, 179–180 (EK), and Ser197.

It belongs to the bacterial/plant glucose-1-phosphate adenylyltransferase family. Homotetramer.

It carries out the reaction alpha-D-glucose 1-phosphate + ATP + H(+) = ADP-alpha-D-glucose + diphosphate. The protein operates within glycan biosynthesis; glycogen biosynthesis. Involved in the biosynthesis of ADP-glucose, a building block required for the elongation reactions to produce glycogen. Catalyzes the reaction between ATP and alpha-D-glucose 1-phosphate (G1P) to produce pyrophosphate and ADP-Glc. The protein is Glucose-1-phosphate adenylyltransferase of Rhodococcus opacus (strain B4).